Consider the following 436-residue polypeptide: Mannan endo-1,4-beta-mannosidase F (436 aa).

The first 18 residues, 1 to 18, serve as a signal peptide directing secretion; it reads MRSLSSVALLSAIGAASA. In terms of domain architecture, CBM1 spans 19–54; the sequence is QAGPWGQCAGISHTGPTTCESGWSCVYLNDWYSQCQ. The segment at 60–88 is disordered; that stretch reads SSSTTVSSTKQPSSTVAAPSSTTSAHTLP. Residues 79 to 113 are ser-rich linker; it reads SSTTSAHTLPTGSGSFAKTDGLKFNIDGKTKYFAG. Residues 114–436 form a catalytic region; the sequence is TNAYWLPFLT…CAVIDHISQI (323 aa). Residues tryptophan 146 and asparagine 260 each contribute to the substrate site. The active-site Proton donor is glutamate 261. Tyrosine 336 is a binding site for substrate. Residue glutamate 370 is the Nucleophile of the active site. Tryptophan 400 serves as a coordination point for substrate.

Belongs to the glycosyl hydrolase 5 (cellulase A) family.

It localises to the secreted. The enzyme catalyses Random hydrolysis of (1-&gt;4)-beta-D-mannosidic linkages in mannans, galactomannans and glucomannans.. Endo-1,4-mannanase, a crucial enzyme for depolymerization of seed galactomannans and wood galactoglucomannans. This Aspergillus clavatus (strain ATCC 1007 / CBS 513.65 / DSM 816 / NCTC 3887 / NRRL 1 / QM 1276 / 107) protein is Mannan endo-1,4-beta-mannosidase F (manF).